We begin with the raw amino-acid sequence, 244 residues long: Methylthioribulose-1-phosphate dehydratase (244 aa).

Cys89 serves as a coordination point for substrate. The Zn(2+) site is built by His107 and His109. Glu130 serves as the catalytic Proton donor/acceptor. Residue His192 participates in Zn(2+) binding.

Belongs to the aldolase class II family. MtnB subfamily. Zn(2+) is required as a cofactor.

The protein resides in the cytoplasm. It catalyses the reaction 5-(methylsulfanyl)-D-ribulose 1-phosphate = 5-methylsulfanyl-2,3-dioxopentyl phosphate + H2O. It functions in the pathway amino-acid biosynthesis; L-methionine biosynthesis via salvage pathway; L-methionine from S-methyl-5-thio-alpha-D-ribose 1-phosphate: step 2/6. Functionally, catalyzes the dehydration of methylthioribulose-1-phosphate (MTRu-1-P) into 2,3-diketo-5-methylthiopentyl-1-phosphate (DK-MTP-1-P). The protein is Methylthioribulose-1-phosphate dehydratase of Saccharomyces cerevisiae (strain ATCC 204508 / S288c) (Baker's yeast).